The chain runs to 302 residues: Large ribosomal subunit protein uL3c (302 aa).

Residues 1 to 36 (MFQSSRLVALGLCAALVLVGGSIILSGLSPNLSSPM) constitute a chloroplast transit peptide. The segment at 208-239 (FQGSIRRWGMKRGPMSHGSKSHRQHGSIGCSA) is disordered.

The protein belongs to the universal ribosomal protein uL3 family. Part of the 50S ribosomal subunit.

Its subcellular location is the plastid. It localises to the chloroplast. In terms of biological role, one of the primary rRNA binding proteins, it binds directly near the 3'-end of the 23S rRNA, where it nucleates assembly of the 50S subunit. This chain is Large ribosomal subunit protein uL3c (RPL3), found in Bigelowiella natans (Pedinomonas minutissima).